A 209-amino-acid polypeptide reads, in one-letter code: Imidazole glycerol phosphate synthase subunit HisH (209 aa).

In terms of domain architecture, Glutamine amidotransferase type-1 spans 1-205; it reads MIAIIDYGMG…QGVVEAWKSS (205 aa). Residue Cys-79 is the Nucleophile of the active site. Catalysis depends on residues His-180 and Glu-182.

In terms of assembly, heterodimer of HisH and HisF.

The protein localises to the cytoplasm. It carries out the reaction 5-[(5-phospho-1-deoxy-D-ribulos-1-ylimino)methylamino]-1-(5-phospho-beta-D-ribosyl)imidazole-4-carboxamide + L-glutamine = D-erythro-1-(imidazol-4-yl)glycerol 3-phosphate + 5-amino-1-(5-phospho-beta-D-ribosyl)imidazole-4-carboxamide + L-glutamate + H(+). It catalyses the reaction L-glutamine + H2O = L-glutamate + NH4(+). It participates in amino-acid biosynthesis; L-histidine biosynthesis; L-histidine from 5-phospho-alpha-D-ribose 1-diphosphate: step 5/9. In terms of biological role, IGPS catalyzes the conversion of PRFAR and glutamine to IGP, AICAR and glutamate. The HisH subunit catalyzes the hydrolysis of glutamine to glutamate and ammonia as part of the synthesis of IGP and AICAR. The resulting ammonia molecule is channeled to the active site of HisF. The chain is Imidazole glycerol phosphate synthase subunit HisH from Bacillus cereus (strain B4264).